We begin with the raw amino-acid sequence, 26 residues long: Delta-hemolysin (26 aa).

Methionine 1 is subject to N-formylmethionine.

It belongs to the delta-lysin family.

The protein localises to the secreted. The protein resides in the host cell membrane. Functionally, lyses erythrocytes and many other mammalian cells. In Staphylococcus aureus (strain Mu50 / ATCC 700699), this protein is Delta-hemolysin (hld).